The following is a 273-amino-acid chain: UPF0380 protein YubP (273 aa).

The protein belongs to the UPF0380 family.

This is UPF0380 protein YubP (yubP) from Escherichia coli (strain K12).